The sequence spans 286 residues: Undecaprenyl-diphosphatase (286 aa).

Helical transmembrane passes span 50-70 (GAAF…VYFW), 97-117 (MGWL…IFQD), 126-146 (LWIV…ADAV), 156-176 (LTYK…IPGV), 200-220 (SFLL…YKVM), 236-256 (LATL…LKFV), and 264-284 (FVWY…FNVI).

Belongs to the UppP family.

It localises to the cell membrane. The enzyme catalyses di-trans,octa-cis-undecaprenyl diphosphate + H2O = di-trans,octa-cis-undecaprenyl phosphate + phosphate + H(+). Its function is as follows. Catalyzes the dephosphorylation of undecaprenyl diphosphate (UPP). Confers resistance to bacitracin. In Arthrobacter sp. (strain FB24), this protein is Undecaprenyl-diphosphatase.